The following is a 153-amino-acid chain: Cofilin (153 aa).

Residues 15-147 (GVAVNDSALQ…AYESVLERVS (133 aa)) form the ADF-H domain.

Belongs to the actin-binding proteins ADF family.

Its subcellular location is the cytoplasm. The protein localises to the cytoskeleton. It localises to the nucleus matrix. Controls reversibly actin polymerization and depolymerization in a pH-sensitive manner. It has the ability to bind G- and F-actin in a 1:1 ratio of cofilin to actin. Binding to F-actin is regulated by tropomyosin. It is the major component of intranuclear and cytoplasmic actin rods. Required for accumulation of actin at the cell division site via depolymerizing actin at the cell ends. In association with myosin II has a role in the assembly of the contractile ring via severing actin filaments. Involved in the maintenance of the contractile ring once formed. In association with profilin and capping protein, has a role in the mitotic reorganization of the actin cytoskeleton. This is Cofilin (COF1) from Yarrowia lipolytica (strain CLIB 122 / E 150) (Yeast).